Reading from the N-terminus, the 292-residue chain is Undecaprenyl-diphosphatase (292 aa).

5 consecutive transmembrane segments (helical) span residues methionine 87 to glutamate 107, phenylalanine 113 to valine 133, alanine 190 to glycine 210, alanine 219 to methionine 239, and phenylalanine 250 to leucine 270.

The protein belongs to the UppP family.

Its subcellular location is the cell membrane. The enzyme catalyses di-trans,octa-cis-undecaprenyl diphosphate + H2O = di-trans,octa-cis-undecaprenyl phosphate + phosphate + H(+). Catalyzes the dephosphorylation of undecaprenyl diphosphate (UPP). Confers resistance to bacitracin. The sequence is that of Undecaprenyl-diphosphatase from Thermobifida fusca (strain YX).